The sequence spans 490 residues: Cytochrome P450 2C13, male-specific (490 aa).

Cysteine 435 lines the heme pocket.

The protein belongs to the cytochrome P450 family. It depends on heme as a cofactor. As to expression, liver, and to a lesser extent in prostate, kidney, heart and brain.

It is found in the endoplasmic reticulum membrane. The protein localises to the microsome membrane. It carries out the reaction an organic molecule + reduced [NADPH--hemoprotein reductase] + O2 = an alcohol + oxidized [NADPH--hemoprotein reductase] + H2O + H(+). Its function is as follows. Cytochromes P450 are a group of heme-thiolate monooxygenases. In liver microsomes, this enzyme is involved in an NADPH-dependent electron transport pathway. It oxidizes a variety of structurally unrelated compounds, including steroids, fatty acids, and xenobiotics. In Rattus norvegicus (Rat), this protein is Cytochrome P450 2C13, male-specific (Cyp2c13).